Reading from the N-terminus, the 77-residue chain is Conotoxin LiC42 (77 aa).

The first 22 residues, 1 to 22, serve as a signal peptide directing secretion; that stretch reads MKLTCVLIIAVLFLTASQLITA. The propeptide occupies 23 to 47; that stretch reads DYSRDKQEYGAERLRDAMGKFKGSR. Disulfide bonds link C49–C62, C56–C67, and C61–C76.

It belongs to the conotoxin O1 superfamily. In terms of tissue distribution, expressed by the venom duct.

The protein localises to the secreted. The sequence is that of Conotoxin LiC42 from Conus lividus (Livid cone).